The chain runs to 379 residues: uncharacterized protein (379 aa).

Disordered regions lie at residues 1-20 (MLPQ…PVGP), 227-290 (VSQR…LQGH), and 331-371 (PGCA…RAGH). Residues 7-20 (QVVHGVQDGPPVGP) are compositionally biased toward low complexity. Over residues 249–261 (GCKDPRVRKEPGR) the composition is skewed to basic and acidic residues.

This is an uncharacterized protein from Dryophytes versicolor (chameleon treefrog).